Consider the following 233-residue polypeptide: 7-cyano-7-deazaguanine synthase (233 aa).

7 to 17 (LSGGLDSAVTS) is an ATP binding site. Zn(2+) is bound by residues Cys195, Cys206, Cys209, and Cys212.

The protein belongs to the QueC family. It depends on Zn(2+) as a cofactor.

It catalyses the reaction 7-carboxy-7-deazaguanine + NH4(+) + ATP = 7-cyano-7-deazaguanine + ADP + phosphate + H2O + H(+). Its pathway is purine metabolism; 7-cyano-7-deazaguanine biosynthesis. Its function is as follows. Catalyzes the ATP-dependent conversion of 7-carboxy-7-deazaguanine (CDG) to 7-cyano-7-deazaguanine (preQ(0)). The sequence is that of 7-cyano-7-deazaguanine synthase from Methanococcus maripaludis (strain C7 / ATCC BAA-1331).